The primary structure comprises 266 residues: Protein STAY-GREEN homolog, chloroplastic (266 aa).

The N-terminal 50 residues, 1 to 50, are a transit peptide targeting the chloroplast; that stretch reads MGTLTASLVAPSKLNPEKHSSLFVYKTRRKSHKNQSIVPVARLFGPAIFE.

Belongs to the staygreen family.

The protein resides in the plastid. The protein localises to the chloroplast. Required to trigger chlorophyll degradation during leaf senescence and fruit ripening. This chain is Protein STAY-GREEN homolog, chloroplastic, found in Capsicum annuum (Capsicum pepper).